Consider the following 255-residue polypeptide: Arginine-binding extracellular protein ArtP (255 aa).

A signal peptide spans 1–19 (MKKWLLLLVAACITFALTA). C20 carries the N-palmitoyl cysteine lipid modification. C20 is lipidated: S-diacylglycerol cysteine.

Belongs to the bacterial solute-binding protein 3 family.

It localises to the cell membrane. In terms of biological role, part of a binding-protein-dependent transport system for arginine. This Bacillus subtilis (strain 168) protein is Arginine-binding extracellular protein ArtP (artP).